We begin with the raw amino-acid sequence, 1076 residues long: Nucleoporin NUP1 (1076 aa).

Low complexity predominate over residues 1-11 (MSSNTSSVMSS). The disordered stretch occupies residues 1–39 (MSSNTSSVMSSPRVEKRSFSSTLKSFFTNPNKKRPSSKK). Serine 2 is subject to N-acetylserine. Residues 19 to 30 (FSSTLKSFFTNP) are compositionally biased toward polar residues. Residues serine 54 and serine 161 each carry the phosphoserine modification. Disordered stretches follow at residues 143 to 183 (SQSK…TNVG) and 224 to 260 (KKDN…ATGP). 2 stretches are compositionally biased toward polar residues: residues 154 to 170 (LCTS…SCTR) and 243 to 260 (NRNN…ATGP). One copy of the FXF 1 repeat lies at 336–338 (FDF). A Phosphothreonine modification is found at threonine 381. At serine 383 the chain carries Phosphoserine. One copy of the FXF 2 repeat lies at 384-386 (FNF). A disordered region spans residues 403 to 518 (TTLFNFGGKS…SFVFGASDKQ (116 aa)). FXFG repeat units follow at residues 406-409 (FNFG) and 422-425 (FKFG). Positions 426–439 (KTSEKSENHTESDA) are enriched in basic and acidic residues. FXFG repeat units follow at residues 448–451 (FSFG) and 484–487 (FDFG). Positions 488-505 (KTGDQKETKKGESEKDAS) are enriched in basic and acidic residues. 4 FXFG repeats span residues 510–513 (FVFG), 525–528 (FTFG), 543–546 (FTFG), and 571–574 (FTFG). The tract at residues 548–743 (AATAKETHTK…SMKSTASTAA (196 aa)) is disordered. FXF repeat units lie at residues 591 to 593 (FSF), 614 to 616 (FSF), 636 to 638 (FSF), and 657 to 659 (FTF). Polar residues-rich tracts occupy residues 634-649 (PTFS…SSVV) and 658-667 (TFASSKTSQP). Position 637 is a phosphoserine (serine 637). Residues 671–674 (FSFG) form an FXFG 9 repeat. The stretch at 689 to 691 (FSF) is one FXF 7 repeat. FXFG repeat units lie at residues 708–711 (FTFG) and 727–730 (FSFG). The segment covering 708-723 (FTFGGSTTNNTTTTST) has biased composition (low complexity). The FXF 8 repeat unit spans residues 753–755 (FSF). The stretch at 800–803 (FSFG) is one FXFG 12 repeat. FXF repeat units follow at residues 819–821 (FSF) and 866–868 (FGF). An FXFG 13 repeat occupies 885–888 (FNFG). Residues 929–931 (FNF) form an FXF 11 repeat. Positions 940–979 (GGSVFNMNGNTNANTVFAGSNNQPHQSQTPSFNTNSSFTP) are disordered. Residues 944-964 (FNMNGNTNANTVFAGSNNQPH) are compositionally biased toward polar residues. Residues 965 to 979 (QSQTPSFNTNSSFTP) are compositionally biased toward low complexity. FG repeat units lie at residues 1008 to 1009 (FG), 1027 to 1028 (FG), and 1038 to 1039 (FG). The disordered stretch occupies residues 1025–1054 (SIFGGAGGVPTTSFGQPQSAPNQMGMGTNN). Positions 1034–1045 (PTTSFGQPQSAP) are enriched in polar residues. Residues 1040 to 1076 (QPQSAPNQMGMGTNNGMSMGGGVMANRKIARMRHSKR) are interaction with KAP95.

As to quaternary structure, component of the nuclear pore complex (NPC). NPC constitutes the exclusive means of nucleocytoplasmic transport. NPCs allow the passive diffusion of ions and small molecules and the active, nuclear transport receptor-mediated bidirectional transport of macromolecules such as proteins, RNAs, ribonucleoparticles (RNPs), and ribosomal subunits across the nuclear envelope. Due to its 8-fold rotational symmetry, all subunits are present with 8 copies or multiples thereof. Interacts through its FG repeats with nuclear transport receptors. Binds to the nuclear basket of the NPC through NUP60. Interacts with KAP122. In terms of processing, phosphorylated by CDC28.

It is found in the nucleus. It localises to the nuclear pore complex. Its subcellular location is the nucleus membrane. Its function is as follows. Functions as a component of the nuclear pore complex (NPC). NPC components, collectively referred to as nucleoporins (NUPs), can play the role of both NPC structural components and of docking or interaction partners for transiently associated nuclear transport factors. Active directional transport is assured by both, a Phe-Gly (FG) repeat affinity gradient for these transport factors across the NPC and a transport cofactor concentration gradient across the nuclear envelope (GSP1 and GSP2 GTPases associated predominantly with GTP in the nucleus, with GDP in the cytoplasm). As one of the FG repeat nucleoporins NUP1 is involved in interactions with and guidance of nuclear transport receptors such as SRP1-KAP95 (importin alpha and beta) through the NPC. Like the closely related NUP2 it also plays an important role in disassembling and recycling SRP1-KAP95 to the cytoplasm after nuclear import. Upon entry of the heterotrimeric SRP1-KAP95-cargo complex in the nucleus, NUP1 binds through its C-terminus to KAP95, thus accelerating the release of KAP95 and, indirectly, of the nuclear localization signal (NLS)-containing cargo from the SRP1-KAP95-cargo complex. The polypeptide is Nucleoporin NUP1 (NUP1) (Saccharomyces cerevisiae (strain ATCC 204508 / S288c) (Baker's yeast)).